A 349-amino-acid chain; its full sequence is Glycosyltransferase 8 domain-containing protein 2 (349 aa).

At methionine 1–lysine 6 the chain is on the cytoplasmic side. The chain crosses the membrane as a helical; Signal-anchor for type II membrane protein span at residues valine 7–tyrosine 24. Residues lysine 25–arginine 349 lie on the Lumenal side of the membrane. Residue asparagine 234 is glycosylated (N-linked (GlcNAc...) asparagine).

This sequence belongs to the glycosyltransferase 8 family.

Its subcellular location is the membrane. The sequence is that of Glycosyltransferase 8 domain-containing protein 2 (Glt8d2) from Mus musculus (Mouse).